The sequence spans 645 residues: Macrolide export ATP-binding/permease protein MacB (645 aa).

One can recognise an ABC transporter domain in the interval 6-244; that stretch reads IELEGIRRSY…SSIAVVPWQA (239 aa). An ATP-binding site is contributed by 42-49; the sequence is GASGSGKS. A run of 4 helical transmembrane segments spans residues 274 to 294, 526 to 546, 574 to 594, and 596 to 616; these read ALTLSGIVIGVASVVAMMAIG, IAAISMLVGGIGIMNIMLITV, AVVLAAIGGVVGLLLGAVIGV, and AALLFGMTVIFSVTMALGALM.

This sequence belongs to the ABC transporter superfamily. Macrolide exporter (TC 3.A.1.122) family. As to quaternary structure, homodimer.

The protein localises to the cell inner membrane. Its function is as follows. Non-canonical ABC transporter that contains transmembrane domains (TMD), which form a pore in the inner membrane, and an ATP-binding domain (NBD), which is responsible for energy generation. Confers resistance against macrolides. The sequence is that of Macrolide export ATP-binding/permease protein MacB from Nitrobacter winogradskyi (strain ATCC 25391 / DSM 10237 / CIP 104748 / NCIMB 11846 / Nb-255).